The following is a 62-amino-acid chain: MKASDLNKSTVDELRSTEAELTKELFNLKFQLHTGRLEDTSKPARIKKDIARVKSVLRAKRG.

This sequence belongs to the universal ribosomal protein uL29 family.

The protein is Large ribosomal subunit protein uL29 of Geotalea daltonii (strain DSM 22248 / JCM 15807 / FRC-32) (Geobacter daltonii).